The sequence spans 96 residues: Large ribosomal subunit protein uL23 (96 aa).

It belongs to the universal ribosomal protein uL23 family. Part of the 50S ribosomal subunit. Contacts protein L29, and trigger factor when it is bound to the ribosome.

Functionally, one of the early assembly proteins it binds 23S rRNA. One of the proteins that surrounds the polypeptide exit tunnel on the outside of the ribosome. Forms the main docking site for trigger factor binding to the ribosome. This chain is Large ribosomal subunit protein uL23, found in Enterococcus faecalis (strain ATCC 700802 / V583).